The primary structure comprises 143 residues: 18.1 kDa class I heat shock protein (143 aa).

A sHSP domain is found at 29–143 (ENSAFVSTRI…PEVKSIEISS (115 aa)).

The protein belongs to the small heat shock protein (HSP20) family. Forms oligomeric structures.

Its subcellular location is the cytoplasm. This is 18.1 kDa class I heat shock protein (HSP18.1) from Medicago sativa (Alfalfa).